The sequence spans 411 residues: Serpin A3-2 (411 aa).

The signal sequence occupies residues Met-1–Cys-24. N-linked (GlcNAc...) asparagine glycans are attached at residues Asn-100, Asn-180, Asn-230, and Asn-264.

It belongs to the serpin family. As to quaternary structure, homodimer.

It localises to the cytoplasmic vesicle. Its subcellular location is the secretory vesicle. The protein localises to the chromaffin granule. It is found in the secreted. In terms of biological role, serine protease inhibitor. This chain is Serpin A3-2, found in Bos taurus (Bovine).